The following is a 286-amino-acid chain: Probable alpha-ketoglutarate-dependent hypophosphite dioxygenase (286 aa).

It belongs to the PhyH family.

Functionally, required for hypophosphite oxidation. This Stutzerimonas stutzeri (Pseudomonas stutzeri) protein is Probable alpha-ketoglutarate-dependent hypophosphite dioxygenase (htxA).